We begin with the raw amino-acid sequence, 229 residues long: Large ribosomal subunit protein uL1 (229 aa).

The protein belongs to the universal ribosomal protein uL1 family. As to quaternary structure, part of the 50S ribosomal subunit.

Functionally, binds directly to 23S rRNA. The L1 stalk is quite mobile in the ribosome, and is involved in E site tRNA release. Its function is as follows. Protein L1 is also a translational repressor protein, it controls the translation of the L11 operon by binding to its mRNA. The sequence is that of Large ribosomal subunit protein uL1 from Ureaplasma urealyticum serovar 10 (strain ATCC 33699 / Western).